Reading from the N-terminus, the 1377-residue chain is DNA-directed RNA polymerase subunit beta'' (1377 aa).

Zn(2+)-binding residues include Cys-224, Cys-294, Cys-301, and Cys-304.

It belongs to the RNA polymerase beta' chain family. RpoC2 subfamily. In plastids the minimal PEP RNA polymerase catalytic core is composed of four subunits: alpha, beta, beta', and beta''. When a (nuclear-encoded) sigma factor is associated with the core the holoenzyme is formed, which can initiate transcription. It depends on Zn(2+) as a cofactor.

The protein resides in the plastid. It localises to the chloroplast. It catalyses the reaction RNA(n) + a ribonucleoside 5'-triphosphate = RNA(n+1) + diphosphate. DNA-dependent RNA polymerase catalyzes the transcription of DNA into RNA using the four ribonucleoside triphosphates as substrates. This Calycanthus floridus var. glaucus (Eastern sweetshrub) protein is DNA-directed RNA polymerase subunit beta''.